A 113-amino-acid polypeptide reads, in one-letter code: U11-theraphotoxin-Hhn1u (113 aa).

Residues 1–21 (MNTVRVTFLLVFVLAVSLGQA) form the signal peptide. The propeptide occupies 22–74 (DKDENRMEMQEKTEQGKSYLDFAENLLLQKLEELEAKLLEEDSEESRNSRQKR). 3 disulfide bridges follow: cysteine 75–cysteine 90, cysteine 82–cysteine 95, and cysteine 89–cysteine 110.

It belongs to the neurotoxin 14 (magi-1) family. 01 (HNTX-16) subfamily. As to expression, expressed by the venom gland.

The protein localises to the secreted. In terms of biological role, probable ion channel inhibitor. This is U11-theraphotoxin-Hhn1u from Cyriopagopus hainanus (Chinese bird spider).